Consider the following 1518-residue polypeptide: Probable serine/threonine-protein kinase HSL1 (1518 aa).

Disordered stretches follow at residues 1–43 (MTGH…GHLE) and 55–83 (RLSQ…PWKL). A compositionally biased stretch (polar residues) spans 55 to 68 (RLSQPDSTVSVATK). Residues 81-369 (WKLGKTLGKG…TQEILKHPLI (289 aa)) form the Protein kinase domain. Residues 87–95 (LGKGSSGRV) and lysine 110 each bind ATP. Aspartate 239 (proton acceptor) is an active-site residue. Residues 467–502 (LSSSSENKKSATESSVNEPRIEYASKTANNTGLRSE) form a disordered region. Residues 492–501 (KTANNTGLRS) show a composition bias toward polar residues. Phosphoserine is present on serine 511. The span at 599 to 611 (SNSRLSLSASTSR) shows a compositional bias: low complexity. A disordered region spans residues 599 to 651 (SNSRLSLSASTSRETVHDNEMPLPQLPKSPSRYSLSRRAIHASPSTKSIHKSL). 2 positions are modified to phosphoserine: serine 629 and serine 685. The disordered stretch occupies residues 741-783 (EEEDNEKERDTQRQRQNDTKSSADTFTISGVSTNKENEGPEYP). The span at 746 to 758 (EKERDTQRQRQND) shows a compositional bias: basic and acidic residues. Residues 759-774 (TKSSADTFTISGVSTN) are compositionally biased toward polar residues. 2 positions are modified to phosphoserine: serine 837 and serine 866. Over residues 856–876 (EQLQKKNDRPSPLKPIQHQEL) the composition is skewed to basic and acidic residues. 4 disordered regions span residues 856-898 (EQLQ…RRNI), 1005-1030 (DDKH…KQSA), 1150-1170 (APSD…RASV), and 1220-1243 (SPEN…RDSN). Phosphoserine is present on serine 1220. Over residues 1222 to 1243 (ENPSNTHMQKRFSSTRGSRDSN) the composition is skewed to polar residues. The residue at position 1250 (serine 1250) is a Phosphoserine. Residues 1259 to 1291 (EEDQDGHTSQADILESSMSYSKRRPSEESVNPK) form a disordered region. Positions 1265–1278 (HTSQADILESSMSY) are enriched in polar residues. A phosphoserine mark is found at serine 1284, serine 1287, and serine 1325.

This sequence belongs to the protein kinase superfamily. CAMK Ser/Thr protein kinase family. NIM1 subfamily.

Its subcellular location is the bud neck. It carries out the reaction L-seryl-[protein] + ATP = O-phospho-L-seryl-[protein] + ADP + H(+). It catalyses the reaction L-threonyl-[protein] + ATP = O-phospho-L-threonyl-[protein] + ADP + H(+). The sequence is that of Probable serine/threonine-protein kinase HSL1 (HSL1) from Saccharomyces cerevisiae (strain ATCC 204508 / S288c) (Baker's yeast).